The sequence spans 170 residues: Large ribosomal subunit protein uL16 (170 aa).

Belongs to the universal ribosomal protein uL16 family.

The protein is Large ribosomal subunit protein uL16 of Methanoculleus marisnigri (strain ATCC 35101 / DSM 1498 / JR1).